A 908-amino-acid polypeptide reads, in one-letter code: Serine/threonine-protein kinase WARTS homolog (908 aa).

Positions 42 to 70 (EIRVGRHRAKLDEIRESLKAYEHEAGLLS) form a coiled coil. Low complexity-rich tracts occupy residues 115–125 (VSSAAVSNSNS) and 168–181 (PSTT…TTTE). 4 disordered regions span residues 115–134 (VSSA…GGHK), 162–183 (MIRN…TEES), 203–225 (NNNA…DSSP), and 388–412 (KSRA…VSSP). Positions 392–404 (QPPPPQYNQPSEP) are enriched in pro residues. Positions 439 to 470 (YMEQHVERLLQQYKEREKRMKQLEKEMVSAQL) form a coiled coil. The Protein kinase domain maps to 502 to 807 (FTVISHIGVG…TAQVKNHPWF (306 aa)). ATP is bound by residues 508–516 (IGVGAFGKV) and K531. The active-site Proton acceptor is the D625. The AGC-kinase C-terminal domain occupies 808-874 (RGIDWVNLRK…RHFFDTDSVG (67 aa)).

It belongs to the protein kinase superfamily. AGC Ser/Thr protein kinase family. As to quaternary structure, interacts (via N-terminus) with yap-1 (via WW domain). The cofactor is Mg(2+). In terms of tissue distribution, expressed in muscles and epithelial tissues including pharynx, intestine and hypodermis. Expressed in vulval and spermathecal seam cells.

It is found in the cytoplasm. The protein localises to the apical cell membrane. It catalyses the reaction L-seryl-[protein] + ATP = O-phospho-L-seryl-[protein] + ADP + H(+). The catalysed reaction is L-threonyl-[protein] + ATP = O-phospho-L-threonyl-[protein] + ADP + H(+). Functionally, phosphorylates yap-1 which may negatively regulate yap-1 nuclear localization. Plays an essential role in larval development. Regulates growth, the formation of gut granules, lifespan and cell and body sizes probably in synergy with the TGF-beta sma/mab pathway. Does not appear to regulate apoptosis and proliferation. In addition, may synergize with the TGF-beta daf-7 dauer pathway to regulate entry into the dauer stage. Maintains the cellular integrity of intestinal cells by regulating the localization of apical actin and junctional proteins. The sequence is that of Serine/threonine-protein kinase WARTS homolog from Caenorhabditis elegans.